We begin with the raw amino-acid sequence, 308 residues long: N-acetylmuramic acid 6-phosphate etherase (308 aa).

One can recognise an SIS domain in the interval 59–222 (TAERLRHGGR…STGVMVKLGK (164 aa)). The Proton donor role is filled by E87. Residue E118 is part of the active site.

The protein belongs to the GCKR-like family. MurNAc-6-P etherase subfamily. As to quaternary structure, homodimer.

It carries out the reaction N-acetyl-D-muramate 6-phosphate + H2O = N-acetyl-D-glucosamine 6-phosphate + (R)-lactate. Its pathway is amino-sugar metabolism; N-acetylmuramate degradation. Specifically catalyzes the cleavage of the D-lactyl ether substituent of MurNAc 6-phosphate, producing GlcNAc 6-phosphate and D-lactate. The protein is N-acetylmuramic acid 6-phosphate etherase of Nostoc punctiforme (strain ATCC 29133 / PCC 73102).